A 530-amino-acid polypeptide reads, in one-letter code: Berberine bridge enzyme-like 4 (530 aa).

Residues 1–19 (MKGTLSVLCLVLLVSVLEA) form the signal peptide. Residues Cys32 and Cys95 are joined by a disulfide bond. N-linked (GlcNAc...) asparagine glycosylation is present at Asn52. Positions 73-247 (NYRKLLAIVA…LSWKINLVDV (175 aa)) constitute an FAD-binding PCMH-type domain. Positions 110–172 (HDYEGLSYMS…QTLAFPAGVC (63 aa)) form a cross-link, 6-(S-cysteinyl)-8alpha-(pros-histidyl)-FAD (His-Cys). 4 N-linked (GlcNAc...) asparagine glycosylation sites follow: Asn257, Asn292, Asn341, and Asn441.

The protein belongs to the oxygen-dependent FAD-linked oxidoreductase family. FAD serves as cofactor. In terms of processing, the FAD cofactor is bound via a bicovalent 6-S-cysteinyl, 8alpha-N1-histidyl FAD linkage.

The protein resides in the secreted. Its subcellular location is the cell wall. Functionally, probable flavin-dependent oxidoreductase. The protein is Berberine bridge enzyme-like 4 of Arabidopsis thaliana (Mouse-ear cress).